Reading from the N-terminus, the 408-residue chain is Serine/threonine transporter SstT (408 aa).

9 helical membrane passes run Leu11 to Ala31, Phe43 to Leu63, Pro81 to Ser101, Ala141 to Leu161, Ile192 to Gly212, Leu216 to Val236, Met298 to Ile318, Val330 to Ile350, and Phe357 to Ile377.

It belongs to the dicarboxylate/amino acid:cation symporter (DAACS) (TC 2.A.23) family.

Its subcellular location is the cell inner membrane. It catalyses the reaction L-serine(in) + Na(+)(in) = L-serine(out) + Na(+)(out). The enzyme catalyses L-threonine(in) + Na(+)(in) = L-threonine(out) + Na(+)(out). Functionally, involved in the import of serine and threonine into the cell, with the concomitant import of sodium (symport system). The chain is Serine/threonine transporter SstT from Shewanella sp. (strain W3-18-1).